Reading from the N-terminus, the 375-residue chain is EP300-interacting inhibitor of differentiation 3 (375 aa).

Residues 23–51 (AWQHLVKQEEEEAVKKEEKEEGEDEEEEG) adopt a coiled-coil conformation. Positions 30 to 68 (QEEEEAVKKEEKEEGEDEEEEGSDSSSDDPNPEPPCMHP) are disordered. Positions 42–60 (EEGEDEEEEGSDSSSDDPN) are enriched in acidic residues.

Belongs to the NSE4 family. In terms of assembly, component of the SMC5-SMC6 complex which consists at least of SMC5, SMC6, NSMCE2, NSMCE1, NSMCE4A or EID3 and NSMCE3; EID3 seems to be a testis-specific subunit. NSMCE1, NSMCE4A or EID3 and NSMCE3 probably form a subcomplex that bridges the head domains of the SMC5:SMC6 heterodimer. Homodimer, and heterodimer with EID2. Interacts with the C-terminal region of CREBBP.

The protein localises to the nucleus. Its subcellular location is the cytoplasm. The protein resides in the chromosome. It localises to the telomere. Tissue-specific component of the SMC5-SMC6 complex, a complex involved in repair of DNA double-strand breaks by homologous recombination. The complex may promote sister chromatid homologous recombination by recruiting the SMC1-SMC3 cohesin complex to double-strand breaks. The complex is required for telomere maintenance via recombination and mediates sumoylation of shelterin complex (telosome) components. Functionally, acts as a repressor of nuclear receptor-dependent transcription possibly by interfering with CREBBP-dependent coactivation. May function as a coinhibitor of other CREBBP/EP300-dependent transcription factors. The chain is EP300-interacting inhibitor of differentiation 3 from Mus musculus (Mouse).